The following is a 722-amino-acid chain: Zinc finger BED domain-containing protein RICESLEEPER 2 (722 aa).

The BED-type zinc-finger motif lies at 66-134 (RKKSLVWEHF…QEHKLALTPA (69 aa)). Cys-89, Cys-92, His-113, and His-127 together coordinate Zn(2+). Residues 572-592 (VEQGDGNNAPASENGTQATAP) are disordered. A compositionally biased stretch (polar residues) spans 576-592 (DGNNAPASENGTQATAP). The HATC (Hobo-Ac-Tam3) domain stretch occupies residues 617 to 702 (ELEQYLDESL…EALVCAKDWL (86 aa)).

Homodimer.

The protein localises to the nucleus. Functionally, transposase-like protein that is essential for plant growth and development. May regulate global gene expression by recruiting other cellular factors. The chain is Zinc finger BED domain-containing protein RICESLEEPER 2 from Oryza sativa subsp. japonica (Rice).